We begin with the raw amino-acid sequence, 604 residues long: Prostaglandin G/H synthase 2 (604 aa).

The first 17 residues, 1–17 (MLFRAVLLCAALGLSQA), serve as a signal peptide directing secretion. The region spanning 18–55 (ANPCCSNPCQNRGECMSTGFDQYKCDCTRTGFYGENCT) is the EGF-like domain. 4 disulfides stabilise this stretch: cysteine 21-cysteine 32, cysteine 22-cysteine 145, cysteine 26-cysteine 42, and cysteine 44-cysteine 54. Asparagine 53 carries an N-linked (GlcNAc...) asparagine glycan. Substrate is bound at residue arginine 106. A glycan (N-linked (GlcNAc...) asparagine) is linked at asparagine 130. Catalysis depends on histidine 193, which acts as the Proton acceptor. Substrate is bound at residue tyrosine 341. Catalysis depends on tyrosine 371, which acts as the For cyclooxygenase activity. Histidine 374 contributes to the heme b binding site. N-linked (GlcNAc...) asparagine glycosylation occurs at asparagine 396. At cysteine 526 the chain carries S-nitrosocysteine. A disulfide bond links cysteine 555 and cysteine 561. Serine 565 is subject to O-acetylserine; by SPHK1. Asparagine 580 carries an N-linked (GlcNAc...) asparagine glycan.

The protein belongs to the prostaglandin G/H synthase family. As to quaternary structure, homodimer. Requires heme b as cofactor. In terms of processing, S-nitrosylation by NOS2 (iNOS) activates enzyme activity. S-nitrosylation may take place on different Cys residues in addition to Cys-526. Acetylated at Ser-565 by SPHK1. During neuroinflammation, acetylation by SPHK1 promotes neuronal secretion of specialized preresolving mediators (SPMs), especially 15-R-lipoxin A4, which results in an increase of phagocytic microglia. Following colon injury, expressed in the wound bed mesenchyme during the first phase of repair, probably by colonic mesenchymal stem cells (at protein level).

It localises to the microsome membrane. Its subcellular location is the endoplasmic reticulum membrane. The protein resides in the nucleus inner membrane. It is found in the nucleus outer membrane. The catalysed reaction is (5Z,8Z,11Z,14Z)-eicosatetraenoate + AH2 + 2 O2 = prostaglandin H2 + A + H2O. It carries out the reaction (5Z,8Z,11Z,14Z)-eicosatetraenoate + 2 O2 = prostaglandin G2. It catalyses the reaction prostaglandin G2 + AH2 = prostaglandin H2 + A + H2O. The enzyme catalyses (5Z,8Z,11Z,14Z,17Z)-eicosapentaenoate + 2 O2 = prostaglandin G3. The catalysed reaction is prostaglandin G3 + AH2 = prostaglandin H3 + A + H2O. It carries out the reaction (8Z,11Z,14Z)-eicosatrienoate + 2 O2 = prostaglandin G1. It catalyses the reaction prostaglandin G1 + AH2 = prostaglandin H1 + A + H2O. The enzyme catalyses 2-(5Z,8Z,11Z,14Z)-eicosatetraenoyl-sn-glycero-3-phosphoethanolamine + 2 O2 = 2-(prostaglandin G2)-sn-glycero-3-phosphoethanolamine. The catalysed reaction is 2-(prostaglandin G2)-sn-glycero-3-phosphoethanolamine + AH2 = 2-(prostaglandin H2)-sn-glycero-3-phosphoethanolamine + A + H2O. It carries out the reaction 2-(5Z,8Z,11Z,14Z)-eicosatetraenoyl-sn-glycero-3-phosphocholine + 2 O2 = 2-(prostaglandin G2)-sn-glycero-3-phosphocholine. It catalyses the reaction 2-(prostaglandin G2)-sn-glycero-3-phosphocholine + AH2 = 2-(prostaglandin H2)-sn-glycero-3-phosphocholine + A + H2O. The enzyme catalyses (15S)-hydroperoxy-(5Z,8Z,11Z,13E)-eicosatetraenoate + AH2 = (15S)-hydroxy-(5Z,8Z,11Z,13E)-eicosatetraenoate + A + H2O. The catalysed reaction is 2-(5Z,8Z,11Z,14Z)-eicosatetraenoyl-sn-glycero-3-phosphocholine + AH2 + O2 = 2-[(15S)-hydroxy-(5Z,8Z,11Z,13E)-eicosatetraenoyl]-sn-glycero-3-phosphocholine + A + H2O. It carries out the reaction 2-(5Z,8Z,11Z,14Z)-eicosatetraenoyl-sn-glycero-3-phosphocholine + AH2 + O2 = 2-[(15R)-hydroxy-(5Z,8Z,11Z,13E)-eicosatetraenoyl]-sn-glycero-3-phosphocholine + A + H2O. It catalyses the reaction 2-(5Z,8Z,11Z,14Z)-eicosatetraenoyl-sn-glycero-3-phosphocholine + AH2 + O2 = 2-[(11R)-hydroxy-(5Z,8Z,12E,14Z)-eicosatetraenoyl]-sn-glycero-3-phosphocholine + A + H2O. The enzyme catalyses (9Z,12Z)-octadecadienoate + AH2 + O2 = 9-hydroxy-(10E,12Z)-octadecadienoate + A + H2O. The catalysed reaction is (9Z,12Z)-octadecadienoate + AH2 + O2 = 13-hydroxy-(9Z,11E)-octadecadienoate + A + H2O. It carries out the reaction (5Z,8Z,11Z,14Z)-eicosatetraenoate + AH2 + O2 = (15R)-hydroxy-(5Z,8Z,11Z,13E)-eicosatetraenoate + A + H2O. It catalyses the reaction (5Z,8Z,11Z,14Z)-eicosatetraenoate + AH2 + O2 = (11R)-hydroxy-(5Z,8Z,12E,14Z)-eicosatetraenoate + A + H2O. The enzyme catalyses (5Z,8Z,11Z,14Z,17Z)-eicosapentaenoate + AH2 + O2 = (11R)-hydroxy-(5Z,8Z,12E,14Z,17Z)-eicosapentaenoate + A + H2O. The catalysed reaction is (5Z,8Z,11Z,14Z,17Z)-eicosapentaenoate + AH2 + O2 = (18S)-hydroxy-(5Z,8Z,11Z,14Z,16E)-eicosapentaenoate + A + H2O. It carries out the reaction (5Z,8Z,11Z,14Z,17Z)-eicosapentaenoate + AH2 + O2 = (18R)-hydroxy-(5Z,8Z,11Z,14Z,16E)-eicosapentaenoate + A + H2O. It catalyses the reaction (5Z,8Z,11Z,14Z,17Z)-eicosapentaenoate + AH2 + O2 = (15R)-hydroxy-(5Z,8Z,11Z,13E,17Z)-eicosapentaenoate + A + H2O. The enzyme catalyses (5Z,8Z,11Z,14Z,17Z)-eicosapentaenoate + AH2 + O2 = (15S)-hydroxy-(5Z,8Z,11Z,13E,17Z)-eicosapentaenoate + A + H2O. The catalysed reaction is (7Z,10Z,13Z,16Z,19Z)-docosapentaenoate + AH2 + O2 = 13R-hydroxy-(7Z,10Z,14E,16Z,19Z)-docosapentaenoate + A + H2O. It carries out the reaction (4Z,7Z,10Z,13Z,16Z,19Z)-docosahexaenoate + AH2 + O2 = 13-hydroxy-(4Z,7Z,10Z,14E,16Z,19Z)-docosahexaenoate + A + H2O. It catalyses the reaction (5S)-hydroxy-(6E,8Z,11Z,14Z)-eicosatetraenoate + AH2 + O2 = (5S,15R)-dihydroxy-(6E,8Z,11Z,13E)-eicosatetraenoate + A + H2O. The enzyme catalyses (4Z,7Z,10Z,13Z,16Z,19Z)-docosahexaenoate + AH2 + O2 = 17R-hydroxy-(4Z,7Z,10Z,13Z,15E,19Z)-docosahexaenoate + A + H2O. The catalysed reaction is (5S)-hydroxy-(6E,8Z,11Z,14Z)-eicosatetraenoate + AH2 + O2 = (5S,15S)-dihydroxy-(6E,8Z,11Z,13E)-eicosatetraenoate + A + H2O. It carries out the reaction (5S)-hydroxy-(6E,8Z,11Z,14Z)-eicosatetraenoate + AH2 + O2 = (5S,11R)-dihydroxy-(6E,8Z,12E,14Z)-eicosatetraenoate + A + H2O. It catalyses the reaction 2-(5Z,8Z,11Z,14Z-eicosatetraenoyl)-glycerol + 2 O2 = 2-glyceryl-prostaglandin G2. The enzyme catalyses 2-glyceryl-prostaglandin G2 + AH2 = 2-glyceryl-prostaglandin H2 + A + H2O. The catalysed reaction is (5Z,8Z,11Z,14Z)-eicosatetraenoate + O2 = (15R)-hydroperoxy-(5Z,8Z,11Z,13E)-eicosatetraenoate. It carries out the reaction (5Z,8Z,11Z,14Z)-eicosatetraenoate + O2 = 11R-hydroperoxy-(5Z,8Z,12E,14Z)-eicosatetraenoate. It catalyses the reaction (9Z,12Z)-octadecadienoate + AH2 + O2 = (9R)-hydroxy-(10E,12Z)-octadecadienoate + A + H2O. The enzyme catalyses (9Z,12Z)-octadecadienoate + AH2 + O2 = (9S)-hydroxy-(10E,12Z)-octadecadienoate + A + H2O. The catalysed reaction is (9Z,12Z)-octadecadienoate + AH2 + O2 = (13S)-hydroxy-(9Z,11E)-octadecadienoate + A + H2O. It carries out the reaction (9Z,12Z)-octadecadienoate + AH2 + O2 = (13R)-hydroxy-(9Z,11E)-octadecadienoate + A + H2O. It functions in the pathway lipid metabolism; prostaglandin biosynthesis. With respect to regulation, inhibited by the nonsteroidal anti-inflammatory drugs aspirin, naproxen, diclofenac, meclofenamic acid, indomethacin and their analogs. Functionally, dual cyclooxygenase and peroxidase in the biosynthesis pathway of prostanoids, a class of C20 oxylipins mainly derived from arachidonate, with a particular role in the inflammatory response. The cyclooxygenase activity oxygenates arachidonate (AA, C20:4(n-6)) to the hydroperoxy endoperoxide prostaglandin G2 (PGG2), and the peroxidase activity reduces PGG2 to the hydroxy endoperoxide PGH2, the precursor of all 2-series prostaglandins and thromboxanes. This complex transformation is initiated by abstraction of hydrogen at carbon 13 (with S-stereochemistry), followed by insertion of molecular O2 to form the endoperoxide bridge between carbon 9 and 11 that defines prostaglandins. The insertion of a second molecule of O2 (bis-oxygenase activity) yields a hydroperoxy group in PGG2 that is then reduced to PGH2 by two electrons. Similarly catalyzes successive cyclooxygenation and peroxidation of dihomo-gamma-linoleate (DGLA, C20:3(n-6)) and eicosapentaenoate (EPA, C20:5(n-3)) to corresponding PGH1 and PGH3, the precursors of 1- and 3-series prostaglandins. In an alternative pathway of prostanoid biosynthesis, converts 2-arachidonoyl lysophopholipids to prostanoid lysophopholipids, which are then hydrolyzed by intracellular phospholipases to release free prostanoids. Metabolizes 2-arachidonoyl glycerol yielding the glyceryl ester of PGH2, a process that can contribute to pain response. Generates lipid mediators from n-3 and n-6 polyunsaturated fatty acids (PUFAs) via a lipoxygenase-type mechanism. Oxygenates PUFAs to hydroperoxy compounds and then reduces them to corresponding alcohols. Plays a role in the generation of resolution phase interaction products (resolvins) during both sterile and infectious inflammation. Metabolizes docosahexaenoate (DHA, C22:6(n-3)) to 17R-HDHA, a precursor of the D-series resolvins (RvDs). As a component of the biosynthetic pathway of E-series resolvins (RvEs), converts eicosapentaenoate (EPA, C20:5(n-3)) primarily to 18S-HEPE that is further metabolized by ALOX5 and LTA4H to generate 18S-RvE1 and 18S-RvE2. In vascular endothelial cells, converts docosapentaenoate (DPA, C22:5(n-3)) to 13R-HDPA, a precursor for 13-series resolvins (RvTs) shown to activate macrophage phagocytosis during bacterial infection. In activated leukocytes, contributes to oxygenation of hydroxyeicosatetraenoates (HETE) to diHETES (5,15-diHETE and 5,11-diHETE). Can also use linoleate (LA, (9Z,12Z)-octadecadienoate, C18:2(n-6)) as substrate and produce hydroxyoctadecadienoates (HODEs) in a regio- and stereospecific manner, being (9R)-HODE ((9R)-hydroxy-(10E,12Z)-octadecadienoate) and (13S)-HODE ((13S)-hydroxy-(9Z,11E)-octadecadienoate) its major products. During neuroinflammation, plays a role in neuronal secretion of specialized preresolving mediators (SPMs) 15R-lipoxin A4 that regulates phagocytic microglia. The polypeptide is Prostaglandin G/H synthase 2 (Mus musculus (Mouse)).